A 527-amino-acid chain; its full sequence is Peptide chain release factor 3 (527 aa).

The tr-type G domain maps to 9–277 (AKRRTFAIIS…AVVDWAPLPL (269 aa)). Residues 18 to 25 (SHPDAGKT), 86 to 90 (DTPGH), and 140 to 143 (NKLD) contribute to the GTP site.

The protein belongs to the TRAFAC class translation factor GTPase superfamily. Classic translation factor GTPase family. PrfC subfamily.

It is found in the cytoplasm. Functionally, increases the formation of ribosomal termination complexes and stimulates activities of RF-1 and RF-2. It binds guanine nucleotides and has strong preference for UGA stop codons. It may interact directly with the ribosome. The stimulation of RF-1 and RF-2 is significantly reduced by GTP and GDP, but not by GMP. This chain is Peptide chain release factor 3, found in Pseudomonas fluorescens (strain ATCC BAA-477 / NRRL B-23932 / Pf-5).